The chain runs to 122 residues: Fluoride-specific ion channel FluC 2 (122 aa).

4 helical membrane-spanning segments follow: residues 4 to 24, 38 to 58, 63 to 83, and 96 to 116; these read VAVW…RFVV, LGTL…GGLA, AALL…TWML, and AALA…FIGQ. Positions 73 and 76 each coordinate Na(+).

It belongs to the fluoride channel Fluc/FEX (TC 1.A.43) family.

It localises to the cell membrane. The enzyme catalyses fluoride(in) = fluoride(out). Its activity is regulated as follows. Na(+) is not transported, but it plays an essential structural role and its presence is essential for fluoride channel function. In terms of biological role, fluoride-specific ion channel. Important for reducing fluoride concentration in the cell, thus reducing its toxicity. The chain is Fluoride-specific ion channel FluC 2 from Mycolicibacterium paratuberculosis (strain ATCC BAA-968 / K-10) (Mycobacterium paratuberculosis).